A 307-amino-acid chain; its full sequence is 2-methoxy-6-polyprenyl-1,4-benzoquinol methylase, mitochondrial (307 aa).

Residues 1–19 (MLISSRIVRSSLVNVPLRL) constitute a mitochondrion transit peptide. S-adenosyl-L-methionine is bound by residues Ser122, Asp148, 179–180 (NG), and Ser197.

Belongs to the class I-like SAM-binding methyltransferase superfamily. MenG/UbiE family. Component of a multi-subunit COQ enzyme complex, composed of at least COQ3, COQ4, COQ5, COQ6, COQ7 and COQ9. Interacts with COQ3.

It localises to the mitochondrion inner membrane. The enzyme catalyses 2-methoxy-6-(all-trans-hexaprenyl)benzene-1,4-diol + S-adenosyl-L-methionine = 5-methoxy-2-methyl-3-(all-trans-hexaprenyl)benzene-1,4-diol + S-adenosyl-L-homocysteine + H(+). It participates in cofactor biosynthesis; ubiquinone biosynthesis. Methyltransferase required for the conversion of 2-hexaprenyl-6-methoxy-1,4-benzoquinol (DDMQH2) to 2-hexaprenyl-3-methyl-6-methoxy-1,4-benzoquinol (DMQH2). In Saccharomyces cerevisiae (strain ATCC 204508 / S288c) (Baker's yeast), this protein is 2-methoxy-6-polyprenyl-1,4-benzoquinol methylase, mitochondrial.